Consider the following 500-residue polypeptide: Probable malate:quinone oxidoreductase (500 aa).

Belongs to the MQO family. FAD is required as a cofactor.

It catalyses the reaction (S)-malate + a quinone = a quinol + oxaloacetate. It functions in the pathway carbohydrate metabolism; tricarboxylic acid cycle; oxaloacetate from (S)-malate (quinone route): step 1/1. The chain is Probable malate:quinone oxidoreductase from Bacillus mycoides (strain KBAB4) (Bacillus weihenstephanensis).